A 370-amino-acid chain; its full sequence is tRNA 2-selenouridine synthase (370 aa).

The region spanning 12–136 (FLDDVPMMDM…MRTFLLETTQ (125 aa)) is the Rhodanese domain. C95 serves as the catalytic S-selanylcysteine intermediate.

The protein belongs to the SelU family. As to quaternary structure, monomer.

It catalyses the reaction 5-methylaminomethyl-2-thiouridine(34) in tRNA + selenophosphate + (2E)-geranyl diphosphate + H2O + H(+) = 5-methylaminomethyl-2-selenouridine(34) in tRNA + (2E)-thiogeraniol + phosphate + diphosphate. It carries out the reaction 5-methylaminomethyl-2-thiouridine(34) in tRNA + (2E)-geranyl diphosphate = 5-methylaminomethyl-S-(2E)-geranyl-thiouridine(34) in tRNA + diphosphate. The catalysed reaction is 5-methylaminomethyl-S-(2E)-geranyl-thiouridine(34) in tRNA + selenophosphate + H(+) = 5-methylaminomethyl-2-(Se-phospho)selenouridine(34) in tRNA + (2E)-thiogeraniol. The enzyme catalyses 5-methylaminomethyl-2-(Se-phospho)selenouridine(34) in tRNA + H2O = 5-methylaminomethyl-2-selenouridine(34) in tRNA + phosphate. Its function is as follows. Involved in the post-transcriptional modification of the uridine at the wobble position (U34) of tRNA(Lys), tRNA(Glu) and tRNA(Gln). Catalyzes the conversion of 2-thiouridine (S2U-RNA) to 2-selenouridine (Se2U-RNA). Acts in a two-step process involving geranylation of 2-thiouridine (S2U) to S-geranyl-2-thiouridine (geS2U) and subsequent selenation of the latter derivative to 2-selenouridine (Se2U) in the tRNA chain. The protein is tRNA 2-selenouridine synthase of Pseudomonas putida (strain GB-1).